Consider the following 941-residue polypeptide: Isoleucine--tRNA ligase (941 aa).

The 'HIGH' region motif lies at 59 to 69 (PYANGNIHIGH). Glutamate 562 serves as a coordination point for L-isoleucyl-5'-AMP. A 'KMSKS' region motif is present at residues 603–607 (KMSKS). Residue lysine 606 coordinates ATP. Positions 904, 907, 924, and 927 each coordinate Zn(2+).

This sequence belongs to the class-I aminoacyl-tRNA synthetase family. IleS type 1 subfamily. As to quaternary structure, monomer. Zn(2+) is required as a cofactor.

The protein localises to the cytoplasm. The enzyme catalyses tRNA(Ile) + L-isoleucine + ATP = L-isoleucyl-tRNA(Ile) + AMP + diphosphate. Its function is as follows. Catalyzes the attachment of isoleucine to tRNA(Ile). As IleRS can inadvertently accommodate and process structurally similar amino acids such as valine, to avoid such errors it has two additional distinct tRNA(Ile)-dependent editing activities. One activity is designated as 'pretransfer' editing and involves the hydrolysis of activated Val-AMP. The other activity is designated 'posttransfer' editing and involves deacylation of mischarged Val-tRNA(Ile). This chain is Isoleucine--tRNA ligase, found in Haemophilus influenzae (strain ATCC 51907 / DSM 11121 / KW20 / Rd).